Reading from the N-terminus, the 984-residue chain is Mediator of RNA polymerase II transcription subunit 5 (984 aa).

Belongs to the Mediator complex subunit 5 family. As to quaternary structure, component of the Mediator complex.

The protein resides in the nucleus. Its function is as follows. Component of the Mediator complex, a coactivator involved in the regulated transcription of nearly all RNA polymerase II-dependent genes. Mediator functions as a bridge to convey information from gene-specific regulatory proteins to the basal RNA polymerase II transcription machinery. Mediator is recruited to promoters by direct interactions with regulatory proteins and serves as a scaffold for the assembly of a functional preinitiation complex with RNA polymerase II and the general transcription factors. The protein is Mediator of RNA polymerase II transcription subunit 5 (NUT1) of Phaeosphaeria nodorum (strain SN15 / ATCC MYA-4574 / FGSC 10173) (Glume blotch fungus).